We begin with the raw amino-acid sequence, 196 residues long: Imidazole glycerol phosphate synthase subunit HisH (196 aa).

Residues 2 to 196 (KIIIINTNCS…EQLIKNFLEI (195 aa)) form the Glutamine amidotransferase type-1 domain. The active-site Nucleophile is the C77. Active-site residues include H178 and E180.

Heterodimer of HisH and HisF.

The protein resides in the cytoplasm. The catalysed reaction is 5-[(5-phospho-1-deoxy-D-ribulos-1-ylimino)methylamino]-1-(5-phospho-beta-D-ribosyl)imidazole-4-carboxamide + L-glutamine = D-erythro-1-(imidazol-4-yl)glycerol 3-phosphate + 5-amino-1-(5-phospho-beta-D-ribosyl)imidazole-4-carboxamide + L-glutamate + H(+). It carries out the reaction L-glutamine + H2O = L-glutamate + NH4(+). The protein operates within amino-acid biosynthesis; L-histidine biosynthesis; L-histidine from 5-phospho-alpha-D-ribose 1-diphosphate: step 5/9. In terms of biological role, IGPS catalyzes the conversion of PRFAR and glutamine to IGP, AICAR and glutamate. The HisH subunit catalyzes the hydrolysis of glutamine to glutamate and ammonia as part of the synthesis of IGP and AICAR. The resulting ammonia molecule is channeled to the active site of HisF. The sequence is that of Imidazole glycerol phosphate synthase subunit HisH from Blochmanniella floridana.